A 394-amino-acid chain; its full sequence is Elongation factor Tu (394 aa).

In terms of domain architecture, tr-type G spans 10–205; that stretch reads KPHMNVGTIG…TMDNYFDLPE (196 aa). The interval 19 to 26 is G1; the sequence is GHVDHGKT. 19-26 serves as a coordination point for GTP; that stretch reads GHVDHGKT. Residue T26 coordinates Mg(2+). Residues 61-65 are G2; that stretch reads GITIN. A G3 region spans residues 82–85; that stretch reads DCPG. GTP-binding positions include 82-86 and 137-140; these read DCPGH and NKLD. The segment at 137-140 is G4; it reads NKLD. Positions 173–175 are G5; that stretch reads SAF.

The protein belongs to the TRAFAC class translation factor GTPase superfamily. Classic translation factor GTPase family. EF-Tu/EF-1A subfamily. In terms of assembly, monomer.

It localises to the cytoplasm. It carries out the reaction GTP + H2O = GDP + phosphate + H(+). In terms of biological role, GTP hydrolase that promotes the GTP-dependent binding of aminoacyl-tRNA to the A-site of ribosomes during protein biosynthesis. The polypeptide is Elongation factor Tu (Borrelia duttonii (strain Ly)).